Here is a 100-residue protein sequence, read N- to C-terminus: Large ribosomal subunit protein bL21 (100 aa).

The protein belongs to the bacterial ribosomal protein bL21 family. In terms of assembly, part of the 50S ribosomal subunit. Contacts protein L20.

Its function is as follows. This protein binds to 23S rRNA in the presence of protein L20. The sequence is that of Large ribosomal subunit protein bL21 from Ureaplasma urealyticum serovar 10 (strain ATCC 33699 / Western).